Reading from the N-terminus, the 61-residue chain is Alpha-conotoxine-like Am1.4 (61 aa).

An N-terminal signal peptide occupies residues 1 to 21; that stretch reads MGMRMMFTVFLLVVLATTVVS. Positions 22 to 44 are excised as a propeptide; the sequence is FMSGRASHGRNAAASDLIALTIK.

This sequence belongs to the conotoxin A superfamily. In terms of processing, is not hydroxylated. Contains 2 disulfide bonds. As to expression, expressed by the venom duct.

The protein localises to the secreted. Its function is as follows. Alpha-conotoxins act on postsynaptic membranes, they bind to the nicotinic acetylcholine receptors (nAChR) and thus inhibit them. The chain is Alpha-conotoxine-like Am1.4 from Conus amadis (Amadis cone).